The following is a 102-amino-acid chain: Co-chaperonin GroES (102 aa).

The protein belongs to the GroES chaperonin family. As to quaternary structure, heptamer of 7 subunits arranged in a ring. Interacts with the chaperonin GroEL.

Its subcellular location is the cytoplasm. In terms of biological role, together with the chaperonin GroEL, plays an essential role in assisting protein folding. The GroEL-GroES system forms a nano-cage that allows encapsulation of the non-native substrate proteins and provides a physical environment optimized to promote and accelerate protein folding. GroES binds to the apical surface of the GroEL ring, thereby capping the opening of the GroEL channel. The sequence is that of Co-chaperonin GroES from Chlamydia felis (strain Fe/C-56) (Chlamydophila felis).